Consider the following 158-residue polypeptide: Transcription elongation factor GreA (158 aa).

Positions alanine 45–glutamate 72 form a coiled coil.

This sequence belongs to the GreA/GreB family.

Functionally, necessary for efficient RNA polymerase transcription elongation past template-encoded arresting sites. The arresting sites in DNA have the property of trapping a certain fraction of elongating RNA polymerases that pass through, resulting in locked ternary complexes. Cleavage of the nascent transcript by cleavage factors such as GreA or GreB allows the resumption of elongation from the new 3'terminus. GreA releases sequences of 2 to 3 nucleotides. This chain is Transcription elongation factor GreA, found in Xylella fastidiosa (strain 9a5c).